A 450-amino-acid polypeptide reads, in one-letter code: 23S rRNA (uracil(1939)-C(5))-methyltransferase RlmD (450 aa).

The TRAM domain maps to 12 to 70 (SKQLSAKLSLNVDQLDHLGAGIAQYQGKVVFIPGALPDETVTVQLTEQKKNYARAKLIK). Residues cysteine 83, cysteine 89, cysteine 92, and cysteine 171 each coordinate [4Fe-4S] cluster. S-adenosyl-L-methionine-binding residues include glutamine 283, phenylalanine 312, asparagine 317, glutamate 333, aspartate 360, and aspartate 380. Catalysis depends on cysteine 406, which acts as the Nucleophile.

The protein belongs to the class I-like SAM-binding methyltransferase superfamily. RNA M5U methyltransferase family. RlmD subfamily.

It catalyses the reaction uridine(1939) in 23S rRNA + S-adenosyl-L-methionine = 5-methyluridine(1939) in 23S rRNA + S-adenosyl-L-homocysteine + H(+). Catalyzes the formation of 5-methyl-uridine at position 1939 (m5U1939) in 23S rRNA. The polypeptide is 23S rRNA (uracil(1939)-C(5))-methyltransferase RlmD (Shewanella putrefaciens (strain CN-32 / ATCC BAA-453)).